We begin with the raw amino-acid sequence, 339 residues long: Uracil nucleotide/cysteinyl leukotriene receptor (339 aa).

Residues 1–36 (MDGLETALPSLTDNASLAYSEQCGQETPLENMLFAC) lie on the Extracellular side of the membrane. Residue Asn-14 is glycosylated (N-linked (GlcNAc...) asparagine). The chain crosses the membrane as a helical span at residues 37–57 (FYLLDFILAFVGNALALWLFI). At 58-64 (WDHKSGT) the chain is on the cytoplasmic side. A helical membrane pass occupies residues 65–85 (PANVFLMHLAVADLSCVLVLP). The Extracellular portion of the chain corresponds to 86 to 105 (TRLVYHFSGNHWPFGEIPCR). A disulfide bond links Cys-104 and Cys-181. The helical transmembrane segment at 106 to 126 (LTGFLFYLNMYASIYFLTCIS) threads the bilayer. The Cytoplasmic segment spans residues 127 to 147 (ADRFLAIVHPVKSLKLRRPLY). Residues 148–168 (AHLACAFLWIVVAVAMAPLLV) traverse the membrane as a helical segment. The Extracellular segment spans residues 169–195 (SPQTVQTNHTVVCLQLYREKASHHALA). Residue Asn-176 is glycosylated (N-linked (GlcNAc...) asparagine). Residues 196 to 216 (SLAVAFTFPFITTVTCYLLII) form a helical membrane-spanning segment. The Cytoplasmic portion of the chain corresponds to 217–232 (RSLRQGPRIEKHLKNK). The chain crosses the membrane as a helical span at residues 233–253 (AVRMIAMVLAIFLICFVPYHI). Residues 254-280 (HRSVYVLHYRGGGTSCSAQRALALGNR) are Extracellular-facing. The helical transmembrane segment at 281–301 (ITSCLTSLNGALDPVMYFFVA) threads the bilayer. Topologically, residues 302 to 339 (EKFRHALCNLLCSKRLTGPPPSFEGKTNESSLSARSEL) are cytoplasmic.

This sequence belongs to the G-protein coupled receptor 1 family. As to expression, expressed in brain, kidney, and heart. Highest level in brain.

It localises to the cell membrane. Dual specificity receptor for uracil nucleotides and cysteinyl leukotrienes (CysLTs). Signals through G(i) and inhibition of adenylyl cyclase. May mediate brain damage by nucleotides and CysLTs following ischemia. This chain is Uracil nucleotide/cysteinyl leukotriene receptor, found in Rattus norvegicus (Rat).